We begin with the raw amino-acid sequence, 392 residues long: GTPase Obg (392 aa).

Residues Met1 to Leu159 enclose the Obg domain. The segment at Asn127–Asp148 is disordered. Positions Arg129–Met143 are enriched in polar residues. An OBG-type G domain is found at Ala160–Ile333. Residues Gly166 to Ser173, Phe191 to Val195, Asp213 to Gly216, Asn283 to Asp286, and Ser314 to Ala316 contribute to the GTP site. The Mg(2+) site is built by Ser173 and Thr193. Acidic residues predominate over residues Glu363–Val386. Residues Glu363 to Arg392 form a disordered region.

This sequence belongs to the TRAFAC class OBG-HflX-like GTPase superfamily. OBG GTPase family. In terms of assembly, monomer. Mg(2+) is required as a cofactor.

The protein localises to the cytoplasm. Its function is as follows. An essential GTPase which binds GTP, GDP and possibly (p)ppGpp with moderate affinity, with high nucleotide exchange rates and a fairly low GTP hydrolysis rate. Plays a role in control of the cell cycle, stress response, ribosome biogenesis and in those bacteria that undergo differentiation, in morphogenesis control. In Enterobacter sp. (strain 638), this protein is GTPase Obg.